The following is a 588-amino-acid chain: MSSCVSSQPSSNRAAPQDELGGRGSSSSESQKPCEALRGLSSLSIHLGMESFIVVTECEPGCAVDLGLARDRPLEADGQEVPLDTSGSQARPHLSGRKLSLQERSQGGLAAGGSLDMNGRCICPSLPYSPVSSPQSSPRLPRRPTVESHHVSITGMQDCVQLNQYTLKDEIGKGSYGVVKLAYNENDNTYYAMKVLSKKKLIRQAGFPRRPPPRGTRPAPGGCIQPRGPIEQVYQEIAILKKLDHPNVVKLVEVLDDPNEDHLYMVFELVNQGPVMEVPTLKPLSEDQARFYFQDLIKGIEYLHYQKIIHRDIKPSNLLVGEDGHIKIADFGVSNEFKGSDALLSNTVGTPAFMAPESLSETRKIFSGKALDVWAMGVTLYCFVFGQCPFMDERIMCLHSKIKSQALEFPDQPDIAEDLKDLITRMLDKNPESRIVVPEIKLHPWVTRHGAEPLPSEDENCTLVEVTEEEVENSVKHIPSLATVILVKTMIRKRSFGNPFEGSRREERSLSAPGNLLTKKPTRECESLSELKEARQRRQPPGHRPAPRGGGGSALVRGSPCVESCWAPAPGSPARMHPLRPEEAMEPE.

The segment covering 1-14 has biased composition (polar residues); it reads MSSCVSSQPSSNRA. 2 disordered regions span residues 1–33 and 78–100; these read MSSC…SQKP and GQEV…RKLS. At serine 2 the chain carries N-acetylserine. Phosphoserine occurs at positions 100, 114, 129, 133, and 137. Residues 128–139 are compositionally biased toward low complexity; it reads YSPVSSPQSSPR. The tract at residues 128-149 is disordered; sequence YSPVSSPQSSPRLPRRPTVESH. Residues 165 to 446 enclose the Protein kinase domain; that stretch reads YTLKDEIGKG…VPEIKLHPWV (282 aa). Residues 171-179 and lysine 194 contribute to the ATP site; that span reads IGKGSYGVV. The tract at residues 204-226 is RP domain; the sequence is QAGFPRRPPPRGTRPAPGGCIQP. The tract at residues 205–225 is disordered; that stretch reads AGFPRRPPPRGTRPAPGGCIQ. Aspartate 312 serves as the catalytic Proton acceptor. An autoinhibitory domain region spans residues 472–477; that stretch reads ENSVKH. A calmodulin-binding region spans residues 475-500; sequence VKHIPSLATVILVKTMIRKRSFGNPF. Proline 479, serine 495, serine 511, threonine 522, and serine 572 each carry phosphoserine. Positions 497 to 588 are disordered; sequence GNPFEGSRRE…LRPEEAMEPE (92 aa). Positions 521 to 536 are enriched in basic and acidic residues; that stretch reads PTRECESLSELKEARQ. Positions 579 to 588 are enriched in basic and acidic residues; it reads LRPEEAMEPE.

The protein belongs to the protein kinase superfamily. Ser/Thr protein kinase family. Interacts with calmodulin. In terms of processing, autophosphorylated and phosphorylated by PKA. Each isoform may show a different pattern of phosphorylation. Ubiquitously expressed with higher levels in the brain. Intermediate levels are detected in spleen, prostate, thyroid and leukocytes. The lowest level is in lung.

Its subcellular location is the nucleus. It localises to the cytoplasm. The protein localises to the cell projection. It is found in the neuron projection. It carries out the reaction L-seryl-[protein] + ATP = O-phospho-L-seryl-[protein] + ADP + H(+). It catalyses the reaction L-threonyl-[protein] + ATP = O-phospho-L-threonyl-[protein] + ADP + H(+). Its activity is regulated as follows. Activated by Ca(2+)/calmodulin. Binding of calmodulin may relieve intrasteric autoinhibition. Autophosphorylation does not alter activity or regulation by Ca(2+)/calmodulin. In part, activity is independent on Ca(2+)/calmodulin. Its function is as follows. Calcium/calmodulin-dependent protein kinase belonging to a proposed calcium-triggered signaling cascade involved in a number of cellular processes. Isoform 1, isoform 2 and isoform 3 phosphorylate CAMK1 and CAMK4. Isoform 3 phosphorylates CAMK1D. Isoform 4, isoform 5 and isoform 6 lacking part of the calmodulin-binding domain are inactive. Efficiently phosphorylates 5'-AMP-activated protein kinase (AMPK) trimer, including that consisting of PRKAA1, PRKAB1 and PRKAG1. This phosphorylation is stimulated in response to Ca(2+) signals. Seems to be involved in hippocampal activation of CREB1. May play a role in neurite growth. Isoform 3 may promote neurite elongation, while isoform 1 may promoter neurite branching. The chain is Calcium/calmodulin-dependent protein kinase kinase 2 (CAMKK2) from Homo sapiens (Human).